The chain runs to 330 residues: MDCPIPQTELDEIYAFATDLARKAGQLLLERVNDRNSEQVYAEKENAVDLVTQTDEDVESLIKTAIQTKYPAHKFLGEESYAKGQSREYLIDEQPTWCVDPLDGTVNFTHAFPMFCVSIGFIVNHYPVIGVIYAPMLNQLFSSCLNRGAWLNEMQQLPLIRKPSIPPLPATAPSKCIFACEWGKDRRDIPDGTLQRKIESFVNMAAERGSRGGKGGMVHGVRSLGSATMDLAYTAMGSVDIWWEGGCWEWDVAAGIAILLEAGGLVTAANPPEDIEGPIEPVKLGSRLYLAIRPAGPSETETGRETQERTVREVWRRVRQLDYERPTRQS.

The Mg(2+) site is built by Glu-78, Asp-100, Leu-102, Asp-103, and Asp-251. Glu-78 provides a ligand contact to substrate. Residues 102–105 (LDGT) and Asp-251 each bind substrate.

This sequence belongs to the inositol monophosphatase superfamily.

In terms of biological role, not known. Probably involved in quinate metabolism. The protein is Protein qutG (qutG) of Emericella nidulans (strain FGSC A4 / ATCC 38163 / CBS 112.46 / NRRL 194 / M139) (Aspergillus nidulans).